The following is a 794-amino-acid chain: 6-hydroxypseudooxynicotine dehydrogenase complex subunit gamma (794 aa).

In terms of assembly, heterohexamer of 2 alpha (kdhA), 2 beta (kdhB) and 2 gamma (kdhC) subunit. Dimer of heterotrimers. It depends on Mo-molybdopterin cytosine dinucleotide as a cofactor.

The enzyme catalyses 6-hydroxypseudooxynicotine + A + H2O = 2,6-dihydroxypseudooxynicotine + AH2. It functions in the pathway alkaloid degradation; nicotine degradation. In terms of biological role, molybdo-flavoprotein enzyme complex involved in nicotine degradation. The subunit gamma (large subunit) contains the substrate-binding sites, the subunit alpha (medium subunit) binds FAD and the subunit beta (small subunit) has a 2Fe-2S ferredoxin-type domain which binds 2 2Fe-2S clusters. This is 6-hydroxypseudooxynicotine dehydrogenase complex subunit gamma (kdhC) from Paenarthrobacter nicotinovorans (Arthrobacter nicotinovorans).